A 503-amino-acid chain; its full sequence is Lysine--tRNA ligase (503 aa).

Residues Glu-410 and Glu-417 each contribute to the Mg(2+) site.

This sequence belongs to the class-II aminoacyl-tRNA synthetase family. As to quaternary structure, homodimer. The cofactor is Mg(2+).

Its subcellular location is the cytoplasm. The catalysed reaction is tRNA(Lys) + L-lysine + ATP = L-lysyl-tRNA(Lys) + AMP + diphosphate. The chain is Lysine--tRNA ligase from Prochlorococcus marinus (strain MIT 9211).